The following is a 352-amino-acid chain: Protein CIA1 (352 aa).

WD repeat units lie at residues 18-64 (GHTD…RSWT), 72-111 (THTR…FECI), 116-155 (GHEN…EYDC), 161-200 (GHTQ…GEYQ), 211-250 (GHSS…MQSG), 265-303 (YHDR…SVDG), and 315-352 (AHEN…ATKP).

It belongs to the WD repeat CIA1 family. In terms of assembly, part of a complex composed of AE7, CIA1, MMS19 and NAR1. Interacts with AE7 and NAR1.

Its subcellular location is the nucleus. It is found in the cytoplasm. Essential component of the cytosolic iron-sulfur (Fe-S) protein assembly (CIA) machinery. Required for the maturation of extramitochondrial Fe/S proteins. In Arabidopsis thaliana (Mouse-ear cress), this protein is Protein CIA1.